Reading from the N-terminus, the 481-residue chain is UDP-glycosyltransferase 71K2 (481 aa).

UDP-alpha-D-glucose is bound by residues Ser285, 350 to 351 (WA), 368 to 376 (HCGWNSILE), and 390 to 393 (YAEQ).

It belongs to the UDP-glycosyltransferase family.

In terms of biological role, glycosyltransferase that possesses chalcone and flavonol 2'-O-glycosyltransferase activity. Converts phloretin to phlorizin (phloretin 2'-O-glucoside), a potent antioxidant. Possesses glycosyltransferase activity toward quercetin, isoliquiritigenin, butein and caffeic acid. This Pyrus communis (Pear) protein is UDP-glycosyltransferase 71K2.